The chain runs to 767 residues: uncharacterized protein (767 aa).

Disordered regions lie at residues 171-209, 314-340, and 533-566; these read LPVW…LRTP, ETEA…CQEE, and RDHG…PRGF. 2 stretches are compositionally biased toward basic and acidic residues: residues 322-331 and 552-564; these read PDPRPEKDAK and ETKD…RDPR.

This is an uncharacterized protein from Homo sapiens (Human).